A 171-amino-acid chain; its full sequence is MTAILITGYRSFEIGIFDHKDPRVSIIKQAIRKDLIGYLENGVDWFIFTGNLGFEQWALEVANELKEEYPLQIATIFLFETHGDRWNEKNQEVLSQFRAVDFVKYYFPNYEQPTQFSQYYQFLLEKTEGAYVFYDTENETNLKYFLKKAKDMPHYQLLLLTFDRLNDMSQS.

Belongs to the UPF0398 family.

This chain is UPF0398 protein M28_Spy1394, found in Streptococcus pyogenes serotype M28 (strain MGAS6180).